A 119-amino-acid polypeptide reads, in one-letter code: uncharacterized protein (119 aa).

Cysteine 9 and cysteine 12 are disulfide-bonded.

This sequence belongs to the ArsC family.

This is an uncharacterized protein from Streptomyces viridochromogenes.